An 829-amino-acid chain; its full sequence is FAST kinase domain-containing protein 1, mitochondrial (829 aa).

N6-acetyllysine is present on Lys346. Residues Ile761 to Glu821 form the RAP domain.

Belongs to the FAST kinase family. In terms of tissue distribution, expression detected in spleen, testis, colon, heart, smooth muscle, kidney, brain, lung, liver, brown and white adipose tissue with highest expression in heart and brown adipose tissue.

The protein localises to the mitochondrion. Its function is as follows. Involved in the down-regulation of mitochondrial MT-ND3 mRNA levels which leads to decreased respiratory complex I abundance and activity. This Mus musculus (Mouse) protein is FAST kinase domain-containing protein 1, mitochondrial (Fastkd1).